The following is a 1510-amino-acid chain: Cysteine-tryptophan domain-containing zinc finger protein 5 (1510 aa).

Positions 174–196 (YCQRTSSENDSNHSQQLLNSGPE) are enriched in polar residues. 4 disordered regions span residues 174-198 (YCQRTSSENDSNHSQQLLNSGPEQK), 449-497 (SSLD…CAKD), 555-574 (KPNYDTTRKPNGENEGYVLD), and 582-616 (LHTEDKSLKTEKESATSGLTDKDFSGGGNDGDHKI). A compositionally biased stretch (basic and acidic residues) spans 454-465 (GFSHKTKSDKCN). The span at 467–476 (QPVTTSSQLQ) shows a compositional bias: polar residues. Composition is skewed to basic and acidic residues over residues 479-497 (PAKKTSLKRDRGKVVCAKD) and 556-574 (PNYDTTRKPNGENEGYVLD). The segment at 645–698 (SEPVDQWVCCDKCETWRLLPYGMNSDTLPKKWRCSMQSWLPGMNNCKLSEGETT) adopts a CW-type zinc-finger fold. Residues C654, C657, C678, and C690 each coordinate Zn(2+). The segment covering 768-780 (KQKRIESSDKGEK) has biased composition (basic and acidic residues). Disordered regions lie at residues 768–893 (KQKR…RDLF), 1003–1050 (STAA…LDRH), and 1149–1194 (LPIH…VRPD). The segment covering 781–790 (STVTISSGQT) has biased composition (polar residues). Over residues 874–893 (NSDRGARASDAGKSDPRDLF) the composition is skewed to basic and acidic residues. Positions 1003 to 1016 (STAATSSSSKVSSS) are enriched in low complexity. Composition is skewed to polar residues over residues 1026–1040 (TRTSPVESVSSSPLR) and 1162–1182 (PDQNGKTLPQYNSNQSDQAKL).

Highly expressed in young panicles. Expressed at low levels in leaf sheaths, nodes, internodes and axillary buds.

The protein localises to the nucleus. Its function is as follows. Binds to histones H3K4me1, H3K4me2 and H3K4me3 in GST pull-down assay. May facilitate the recruitment of effectors to mediate gene expression. In Oryza sativa subsp. japonica (Rice), this protein is Cysteine-tryptophan domain-containing zinc finger protein 5.